A 1040-amino-acid polypeptide reads, in one-letter code: Multidrug resistance protein MdtB (1040 aa).

A run of 12 helical transmembrane segments spans residues 25–45 (LLMA…PVAA), 347–367 (LMLA…NIPA), 369–389 (IIPG…MVFL), 396–416 (LTLM…IVVI), 440–460 (IGFT…PLLF), 472–492 (FAVT…TLTP), 537–557 (WLTL…WIVI), 863–883 (LGST…VLGV), 888–908 (FIHP…ALLA), 910–930 (IIAG…LIGI), 968–988 (ILMT…STGV), and 998–1018 (IAMV…TPVI).

The protein belongs to the resistance-nodulation-cell division (RND) (TC 2.A.6) family. MdtB subfamily. In terms of assembly, part of a tripartite efflux system composed of MdtA, MdtB and MdtC. MdtB forms a heteromultimer with MdtC.

The protein localises to the cell inner membrane. This Salmonella schwarzengrund (strain CVM19633) protein is Multidrug resistance protein MdtB.